A 147-amino-acid polypeptide reads, in one-letter code: Lysozyme C (147 aa).

The N-terminal stretch at 1-18 (MKFFLILGFCLLPLIAQG) is a signal peptide. In terms of domain architecture, C-type lysozyme spans 19–147 (KVFQRCELAA…VSQWIRGCRV (129 aa)). Intrachain disulfides connect C24-C145, C48-C133, C82-C98, and C94-C112. Catalysis depends on residues E53 and D70. A substrate-binding site is contributed by D119.

Belongs to the glycosyl hydrolase 22 family. Monomer. Expressed in liver and ovary. Not expressed in bone marrow, lung, spleen, intestine or oviduct.

It localises to the secreted. The catalysed reaction is Hydrolysis of (1-&gt;4)-beta-linkages between N-acetylmuramic acid and N-acetyl-D-glucosamine residues in a peptidoglycan and between N-acetyl-D-glucosamine residues in chitodextrins.. Lysozymes have primarily a bacteriolytic function; those in tissues and body fluids are associated with the monocyte-macrophage system and enhance the activity of immunoagents. Has bacteriolytic activity against M.luteus. This is Lysozyme C from Dromaius novaehollandiae (Emu).